The following is a 377-amino-acid chain: Flagellin D (377 aa).

2 coiled-coil regions span residues 103-129 and 310-339; these read SNSK…IAET and AFQN…IKDT.

It belongs to the bacterial flagellin family. In terms of assembly, heteromer of multiple flagellin subunits including FlaA, FlaB, FlaC, FlaD and FlaE.

The protein resides in the secreted. Its subcellular location is the bacterial flagellum. Its function is as follows. Flagellin is the subunit protein which polymerizes to form the filaments of bacterial flagella. FlaD is not essential for flagellar synthesis and motility. This chain is Flagellin D (flaD), found in Vibrio cholerae serotype O1 (strain ATCC 39315 / El Tor Inaba N16961).